A 200-amino-acid chain; its full sequence is Probable fatty acid desaturase MIMI_L630 (200 aa).

Helical transmembrane passes span 9–29 (FIQI…YHWI) and 79–99 (IGPL…FIMI).

The protein belongs to the fatty acid desaturase CarF family.

It is found in the membrane. The protein is Probable fatty acid desaturase MIMI_L630 of Acanthamoeba polyphaga mimivirus (APMV).